The sequence spans 159 residues: MSQVILDLQIASEQAQGLPEEKDFQRWLEGVLPQFQEVSEVTIRIVDEAESRDLNNTYRGKDKPTNVLSFPFEAPPEVELPLLGDLIICRQVVEQEAAEQEKTVEEHWAHMVVHGSLHLLGYDHIEDSEAEEMEALETEIMQSMGYADPYLAEKDGLTE.

Residues His-114, His-118, and His-124 each contribute to the Zn(2+) site.

It belongs to the endoribonuclease YbeY family. Requires Zn(2+) as cofactor.

It localises to the cytoplasm. Its function is as follows. Single strand-specific metallo-endoribonuclease involved in late-stage 70S ribosome quality control and in maturation of the 3' terminus of the 16S rRNA. The polypeptide is Endoribonuclease YbeY (Pectobacterium carotovorum subsp. carotovorum (strain PC1)).